The following is a 26-amino-acid chain: Melittin (26 aa).

G1 carries the post-translational modification N-formylglycine; partial. The residue at position 26 (E26) is a Glutamic acid 1-amide.

The protein belongs to the melittin family. In terms of assembly, monomer (in solution and for integration into membranes), homotetramer (in solution and potentially as a toroidal pore in membranes), and potenially homomultimer (as a toroidal pore in membranes). As to expression, expressed by the venom gland.

The protein localises to the secreted. The protein resides in the target cell membrane. Its function is as follows. Main toxin of bee venom with strong hemolytic activity and antimicrobial activity. It has enhancing effects on bee venom phospholipase A2 activity. This amphipathic toxin binds to negatively charged membrane surface and forms pore by inserting into lipid bilayers inducing the leakage of ions and molecules and the enhancement of permeability that ultimately leads to cell lysis. It acts as a voltage-gated pore with higher selectivity for anions over cations. The ion conductance has been shown to be voltage-dependent. Self-association of melittin in membranes is promoted by high ionic strength, but not by the presence of negatively charged lipids. In vivo, intradermal injection into healthy human volunteers produce sharp pain sensation and an inflammatory response. It produces pain by activating primary nociceptor cells directly and indirectly due to its ability to activate plasma membrane phospholipase A2 and its pore-forming activity. The chain is Melittin (MELT) from Apis dorsata (Giant honeybee).